The following is a 309-amino-acid chain: Methionyl-tRNA formyltransferase (309 aa).

107–110 (SLLP) contacts (6S)-5,6,7,8-tetrahydrofolate.

This sequence belongs to the Fmt family.

The enzyme catalyses L-methionyl-tRNA(fMet) + (6R)-10-formyltetrahydrofolate = N-formyl-L-methionyl-tRNA(fMet) + (6S)-5,6,7,8-tetrahydrofolate + H(+). Attaches a formyl group to the free amino group of methionyl-tRNA(fMet). The formyl group appears to play a dual role in the initiator identity of N-formylmethionyl-tRNA by promoting its recognition by IF2 and preventing the misappropriation of this tRNA by the elongation apparatus. This chain is Methionyl-tRNA formyltransferase, found in Borrelia turicatae (strain 91E135).